The primary structure comprises 458 residues: (R)-6-hydroxynicotine oxidase (458 aa).

The region spanning Arg-33–Leu-204 is the FAD-binding PCMH-type domain. Residues Arg-67–Pro-73, His-129–Pro-130, Phe-134–Leu-137, Gly-144, Thr-195, Asn-413, and Asn-450 each bind FAD. His-71 carries the post-translational modification Pros-8alpha-FAD histidine.

It belongs to the oxygen-dependent FAD-linked oxidoreductase family. In terms of assembly, monomer. Requires FAD as cofactor.

Its subcellular location is the cytoplasm. It catalyses the reaction (R)-6-hydroxynicotine + O2 + H2O = 6-hydroxypseudooxynicotine + H2O2. The enzyme catalyses (R)-6-hydroxynicotine + O2 = 6-hydroxy-N-methylmyosmine + H2O2. The protein operates within alkaloid degradation; nicotine degradation; 6-hydroxypseudooxynicotine from nicotine (R-isomer route): step 2/2. Its activity is regulated as follows. Inhibited by (S)-6-hydroxynicotine. Inhibited by high concentrations of phenanthroline. In terms of biological role, involved in the degradation of D-nicotine. Catalyzes the oxidation of (R)-6-hydroxynicotine (6-hydroxy-D-nicotine) to 6-hydroxypseudooxynicotine. Oxidation of the pyrrolidine ring of (R)-6-hydroxynicotine leads to the formation of the optically inactive 6-hydroxy-N-methylmyosmine, which hydrolyzes spontaneously to 6-hydroxypseudooxynicotine. Acts with absolute stereospecificity on the D-form of 6-hydroxynicotine. Shows lower activity with (R)-6-hydroxynornicotine, and weak activity with (R)-4-(1-methylpyrrolidine-2-yl)phenol, (R)-6-chloronicotine and (R)-nicotine. This is (R)-6-hydroxynicotine oxidase from Paenarthrobacter nicotinovorans (Arthrobacter nicotinovorans).